The primary structure comprises 276 residues: Fructoselysine 3-epimerase (276 aa).

Residue E148 is the Proton donor/acceptor of the active site. Residues E148, D181, H207, and E247 each coordinate a divalent metal cation. E247 acts as the Proton donor/acceptor in catalysis.

This sequence belongs to the FrlC family. As to quaternary structure, homooctamer. A divalent metal cation is required as a cofactor.

The enzyme catalyses N(6)-(D-psicosyl)-L-lysine = N(6)-(D-fructosyl)-L-lysine. Its function is as follows. Catalyzes the reversible interconversion of fructoselysine with its C-3 epimer, psicoselysine. May allow S.flexneri to utilize psicoselysine for growth. This is Fructoselysine 3-epimerase (frlC) from Shigella flexneri.